The following is a 195-amino-acid chain: MASRFIKCVTVGDGAVGKTCMLISYTSNTFPTDYVPTVFDNFSANVVVDGNTVNLGLWDTAGQEDYNRLRPLSYRGADVFILAFSLISKASYENIAKKWIPELRHYAPGVPIILVGTKLDLRDDKQFFIDHPGAVPITTNQGEELKKLIGSAVYIECSSKTQQNVKAVFDAAIKVVLQPPKQKKKKKNKNRCAFL.

Residues 12–19 (GDGAVGKT), 30–37 (FPTDYVPT), 59–63 (DTAGQ), and 117–120 (TKLD) each bind GTP. The short motif at 34–42 (YVPTVFDNF) is the Effector region element. Cysteine 192 carries the cysteine methyl ester modification. Cysteine 192 carries S-geranylgeranyl cysteine lipidation. Residues 193 to 195 (AFL) constitute a propeptide, removed in mature form.

Belongs to the small GTPase superfamily. Rho family. In terms of assembly, interacts with SPK1, ICR1, ICR5 and PIR. As to expression, ubiquitous.

It localises to the cytoplasm. It is found in the cell membrane. Inactive GDP-bound Rho GTPases reside in the cytosol, are found in a complex with Rho GDP-dissociation inhibitors (Rho GDIs), and are released from the GDI protein in order to translocate to membranes upon activation. Involved in cell polarity control during the actin-dependent tip growth of root hairs, thus regulating root hair length and root hair initiation. Contributes, in a SPK1-dependent manner, to the prevention of cortical microtubules organization into parallel arrays oriented perpendicular to the axis of cell elongation to limit anisotropic cell growth during petal development. May regulate a WAVE complex that activates the Arp2/3 complex. The polypeptide is Rac-like GTP-binding protein ARAC4 (Arabidopsis thaliana (Mouse-ear cress)).